The chain runs to 668 residues: NADH-ubiquinone oxidoreductase chain 5 (668 aa).

A run of 18 helical transmembrane segments spans residues 1-21, 31-51, 81-101, 111-131, 133-153, 178-198, 211-231, 251-271, 283-303, 311-331, 339-359, 375-395, 421-441, 462-482, 519-539, 566-586, 629-649, and 650-668; these read MYII…LFGH, IAVG…YEIL, LTSI…LYSM, TRFF…VTAD, FVQL…LINF, LFFG…SVIF, LLGY…IGVV, TPVS…FLVL, ILNI…TIGI, VIAY…GLLN, LTTH…VIHG, LMPL…GFPF, AIIG…LLIL, TNMV…GYLT, LLPL…YFNL, FDFL…YDVM, IVQA…IGFL, and YVEL…PKIK.

Belongs to the complex I subunit 5 family.

It localises to the mitochondrion inner membrane. The enzyme catalyses a ubiquinone + NADH + 5 H(+)(in) = a ubiquinol + NAD(+) + 4 H(+)(out). Core subunit of the mitochondrial membrane respiratory chain NADH dehydrogenase (Complex I) that is believed to belong to the minimal assembly required for catalysis. Complex I functions in the transfer of electrons from NADH to the respiratory chain. The immediate electron acceptor for the enzyme is believed to be ubiquinone. The chain is NADH-ubiquinone oxidoreductase chain 5 (nad5) from Dictyostelium citrinum (Slime mold).